We begin with the raw amino-acid sequence, 373 residues long: L-threonine 3-dehydrogenase, mitochondrial (373 aa).

Residues 62-67 (GGLGQL), 88-90 (DIR), 106-107 (DI), tyrosine 195, lysine 199, and isoleucine 225 contribute to the NAD(+) site. Catalysis depends on tyrosine 195, which acts as the Proton donor/acceptor.

Belongs to the NAD(P)-dependent epimerase/dehydratase family. As to quaternary structure, homodimer.

Its subcellular location is the mitochondrion. It carries out the reaction L-threonine + NAD(+) = (2S)-2-amino-3-oxobutanoate + NADH + H(+). It functions in the pathway amino-acid degradation; L-threonine degradation via oxydo-reductase pathway; glycine from L-threonine: step 1/2. Catalyzes the NAD(+)-dependent oxidation of L-threonine to 2-amino-3-ketobutyrate, mediating L-threonine catabolism. The sequence is that of L-threonine 3-dehydrogenase, mitochondrial from Sus scrofa (Pig).